The chain runs to 213 residues: Putative tRNA methyltransferase MPN_351 (213 aa).

Belongs to the TrmK family.

The protein resides in the cytoplasm. This chain is Putative tRNA methyltransferase MPN_351, found in Mycoplasma pneumoniae (strain ATCC 29342 / M129 / Subtype 1) (Mycoplasmoides pneumoniae).